Consider the following 460-residue polypeptide: GTPase Der (460 aa).

EngA-type G domains are found at residues 4–174 and 184–361; these read PQVA…PRRE and PKIA…AERS. Residues 10-17, 57-61, 126-129, 190-197, 237-241, and 302-305 each bind GTP; these read GRPNVGKS, DTGGL, NKAE, DTAGI, and NKWD. Positions 362–446 constitute a KH-like domain; sequence RRIPTAELNQ…PIELVFRERE (85 aa).

This sequence belongs to the TRAFAC class TrmE-Era-EngA-EngB-Septin-like GTPase superfamily. EngA (Der) GTPase family. Associates with the 50S ribosomal subunit.

GTPase that plays an essential role in the late steps of ribosome biogenesis. The protein is GTPase Der of Thermomicrobium roseum (strain ATCC 27502 / DSM 5159 / P-2).